A 310-amino-acid chain; its full sequence is Ribosomal RNA small subunit methyltransferase H (310 aa).

S-adenosyl-L-methionine contacts are provided by residues 32–34 (GGH), D52, F79, D100, and Q107.

Belongs to the methyltransferase superfamily. RsmH family.

It is found in the cytoplasm. The enzyme catalyses cytidine(1402) in 16S rRNA + S-adenosyl-L-methionine = N(4)-methylcytidine(1402) in 16S rRNA + S-adenosyl-L-homocysteine + H(+). Specifically methylates the N4 position of cytidine in position 1402 (C1402) of 16S rRNA. In Bacillus cereus (strain ATCC 10987 / NRS 248), this protein is Ribosomal RNA small subunit methyltransferase H.